The primary structure comprises 119 residues: Ribonuclease P protein component (119 aa).

Belongs to the RnpA family. Consists of a catalytic RNA component (M1 or rnpB) and a protein subunit.

It catalyses the reaction Endonucleolytic cleavage of RNA, removing 5'-extranucleotides from tRNA precursor.. Its function is as follows. RNaseP catalyzes the removal of the 5'-leader sequence from pre-tRNA to produce the mature 5'-terminus. It can also cleave other RNA substrates such as 4.5S RNA. The protein component plays an auxiliary but essential role in vivo by binding to the 5'-leader sequence and broadening the substrate specificity of the ribozyme. In Pectobacterium atrosepticum (strain SCRI 1043 / ATCC BAA-672) (Erwinia carotovora subsp. atroseptica), this protein is Ribonuclease P protein component.